The sequence spans 637 residues: Threonine--tRNA ligase (637 aa).

Residues 1 to 61 enclose the TGS domain; the sequence is MIKVTLKDGK…DKDCNLEILT (61 aa). The tract at residues 242–532 is catalytic; it reads DHRKIGKELD…LIEHYAGAFP (291 aa). 3 residues coordinate Zn(2+): cysteine 333, histidine 384, and histidine 509.

The protein belongs to the class-II aminoacyl-tRNA synthetase family. In terms of assembly, homodimer. It depends on Zn(2+) as a cofactor.

The protein localises to the cytoplasm. It carries out the reaction tRNA(Thr) + L-threonine + ATP = L-threonyl-tRNA(Thr) + AMP + diphosphate + H(+). Its function is as follows. Catalyzes the attachment of threonine to tRNA(Thr) in a two-step reaction: L-threonine is first activated by ATP to form Thr-AMP and then transferred to the acceptor end of tRNA(Thr). Also edits incorrectly charged L-seryl-tRNA(Thr). The polypeptide is Threonine--tRNA ligase (Clostridium acetobutylicum (strain ATCC 824 / DSM 792 / JCM 1419 / IAM 19013 / LMG 5710 / NBRC 13948 / NRRL B-527 / VKM B-1787 / 2291 / W)).